Consider the following 65-residue polypeptide: uncharacterized protein (65 aa).

This is an uncharacterized protein from Dictyostelium discoideum (Social amoeba).